A 258-amino-acid chain; its full sequence is Tryptophan synthase alpha chain (258 aa).

Active-site proton acceptor residues include Glu47 and Asp58.

The protein belongs to the TrpA family. As to quaternary structure, tetramer of two alpha and two beta chains.

The catalysed reaction is (1S,2R)-1-C-(indol-3-yl)glycerol 3-phosphate + L-serine = D-glyceraldehyde 3-phosphate + L-tryptophan + H2O. It functions in the pathway amino-acid biosynthesis; L-tryptophan biosynthesis; L-tryptophan from chorismate: step 5/5. The alpha subunit is responsible for the aldol cleavage of indoleglycerol phosphate to indole and glyceraldehyde 3-phosphate. This chain is Tryptophan synthase alpha chain, found in Bacillus mycoides (strain KBAB4) (Bacillus weihenstephanensis).